A 302-amino-acid polypeptide reads, in one-letter code: 33 kDa chaperonin (302 aa).

2 disulfide bridges follow: Cys-247/Cys-249 and Cys-280/Cys-283.

It belongs to the HSP33 family. In terms of processing, under oxidizing conditions two disulfide bonds are formed involving the reactive cysteines. Under reducing conditions zinc is bound to the reactive cysteines and the protein is inactive.

It is found in the cytoplasm. Functionally, redox regulated molecular chaperone. Protects both thermally unfolding and oxidatively damaged proteins from irreversible aggregation. Plays an important role in the bacterial defense system toward oxidative stress. This is 33 kDa chaperonin from Prochlorococcus marinus (strain AS9601).